A 182-amino-acid polypeptide reads, in one-letter code: SAGA-associated factor 11 homolog (182 aa).

The disordered stretch occupies residues 61-84 (GSGAAVEGEPEDSKPYTIVDQPDT). The segment at 98 to 119 (CHCPNCNRIVAASRFAPHLEKC) adopts an SGF11-type zinc-finger fold. The tract at residues 133–182 (RIANTRDVGTGNYFGGDEDDEDDADWSGEKRKKKISQVRTNGSKKNGKTS) is disordered. Over residues 148–158 (GDEDDEDDADW) the composition is skewed to acidic residues.

It belongs to the SGF11 family. Component of some SAGA transcription coactivator-HAT complexes. Within the SAGA complex, participates in a subcomplex of SAGA called the DUB module (deubiquitination module).

The protein resides in the nucleus. Functionally, component of the transcription regulatory histone acetylation (HAT) complex SAGA, a multiprotein complex that activates transcription by remodeling chromatin and mediating histone acetylation and deubiquitination. Within the SAGA complex, participates in a subcomplex that specifically deubiquitinates histone H2B. The SAGA complex is recruited to specific gene promoters by activators, where it is required for transcription. The sequence is that of SAGA-associated factor 11 homolog from Anopheles gambiae (African malaria mosquito).